We begin with the raw amino-acid sequence, 267 residues long: Zein-alpha Z4 (267 aa).

A signal peptide spans 1-21 (MAAKIFCLIMLLGLSASAATA).

The protein belongs to the zein family.

Its function is as follows. Zeins are major seed storage proteins. The chain is Zein-alpha Z4 from Zea mays (Maize).